We begin with the raw amino-acid sequence, 442 residues long: Thymidine phosphorylase (442 aa).

The protein belongs to the thymidine/pyrimidine-nucleoside phosphorylase family. Homodimer.

The catalysed reaction is thymidine + phosphate = 2-deoxy-alpha-D-ribose 1-phosphate + thymine. It functions in the pathway pyrimidine metabolism; dTMP biosynthesis via salvage pathway; dTMP from thymine: step 1/2. In terms of biological role, the enzymes which catalyze the reversible phosphorolysis of pyrimidine nucleosides are involved in the degradation of these compounds and in their utilization as carbon and energy sources, or in the rescue of pyrimidine bases for nucleotide synthesis. The protein is Thymidine phosphorylase of Vibrio vulnificus (strain CMCP6).